A 695-amino-acid chain; its full sequence is Elongation factor G 1 (695 aa).

One can recognise a tr-type G domain in the interval 5–280; it reads ARYRNIGIFA…AVVDYLPSPT (276 aa). Residues 14–21, 78–82, and 132–135 each bind GTP; these read AHVDAGKT, DTPGH, and NKLD.

The protein belongs to the TRAFAC class translation factor GTPase superfamily. Classic translation factor GTPase family. EF-G/EF-2 subfamily.

It localises to the cytoplasm. Its function is as follows. Catalyzes the GTP-dependent ribosomal translocation step during translation elongation. During this step, the ribosome changes from the pre-translocational (PRE) to the post-translocational (POST) state as the newly formed A-site-bound peptidyl-tRNA and P-site-bound deacylated tRNA move to the P and E sites, respectively. Catalyzes the coordinated movement of the two tRNA molecules, the mRNA and conformational changes in the ribosome. In Pseudoalteromonas atlantica (strain T6c / ATCC BAA-1087), this protein is Elongation factor G 1.